The chain runs to 269 residues: Carbohydrate metabolism regulator TYE7 (269 aa).

Residues 146–178 (QPKIKQEPGTKAATKPKRRAPRKKLTESQKKAH) form a disordered region. Residues 159-168 (TKPKRRAPRK) are compositionally biased toward basic residues. Residues 169-178 (KLTESQKKAH) show a composition bias toward basic and acidic residues. Positions 173-244 (SQKKAHNKIE…EKATEYILHL (72 aa)) constitute a bHLH domain.

In terms of assembly, efficient DNA binding requires dimerization with another bHLH protein.

The protein localises to the nucleus. Functionally, key transcriptional regulator of carbohydrate metabolism. Binds the promoter sequences of the glycolytic genes at the CANNTG motif and activates their expression during growth on either fermentable or non-fermentable carbon sources as well as under hypoxic growth conditions. Complete glycolytic activation by GAL4 and TYE7 is required for full virulence. Involved in biofilm formation and negatively regulates hyphal formation under hypoxia. Also controls the expression of the copper transport protein CTR1. In Candida albicans (strain SC5314 / ATCC MYA-2876) (Yeast), this protein is Carbohydrate metabolism regulator TYE7 (TYE7).